Reading from the N-terminus, the 439-residue chain is Proton pump-interactor 4 (439 aa).

Residues 286–354 are a coiled coil; sequence KEEKEIDEET…AKKKKAVCKS (69 aa). Residues 415–435 form a helical membrane-spanning segment; the sequence is LWVWTVSSAAVALPLALLVVF.

The protein belongs to the plant Proton pump-interactor protein family.

The protein resides in the cell membrane. It is found in the endoplasmic reticulum membrane. In terms of biological role, may regulate plasma membrane ATPase activity. In Arabidopsis thaliana (Mouse-ear cress), this protein is Proton pump-interactor 4 (PPI4).